A 362-amino-acid polypeptide reads, in one-letter code: Oxygen-dependent coproporphyrinogen-III oxidase (362 aa).

Serine 118 contributes to the substrate binding site. Residues histidine 122 and histidine 132 each contribute to the a divalent metal cation site. The active-site Proton donor is histidine 132. Asparagine 134–arginine 136 lines the substrate pocket. Residues histidine 166 and histidine 196 each contribute to the a divalent metal cation site. An important for dimerization region spans residues tyrosine 286 to glutamate 321.

The protein belongs to the aerobic coproporphyrinogen-III oxidase family. Homodimer. The cofactor is a divalent metal cation.

The protein resides in the cytoplasm. The enzyme catalyses coproporphyrinogen III + O2 + 2 H(+) = protoporphyrinogen IX + 2 CO2 + 2 H2O. It participates in porphyrin-containing compound metabolism; protoporphyrin-IX biosynthesis; protoporphyrinogen-IX from coproporphyrinogen-III (O2 route): step 1/1. In terms of biological role, involved in the heme and chlorophyll biosynthesis. Catalyzes the aerobic oxidative decarboxylation of propionate groups of rings A and B of coproporphyrinogen-III to yield the vinyl groups in protoporphyrinogen-IX. The sequence is that of Oxygen-dependent coproporphyrinogen-III oxidase from Synechococcus sp. (strain CC9605).